The primary structure comprises 858 residues: Heat shock protein 105 kDa (858 aa).

Ser2 carries the N-acetylserine modification. Position 471 is an N6-acetyllysine (Lys471). 2 disordered regions span residues 500–584 and 796–858; these read KVPT…PPEA and CEPV…MDLD. A compositionally biased stretch (acidic residues) spans 504–514; the sequence is EENEMSSEADM. Residues Ser509 and Ser510 each carry the phosphoserine modification. The segment covering 532-554 has biased composition (polar residues); that stretch reads QQDNSEAGTQPQVQTDAQQTSQS. Ser557 bears the Phosphoserine mark. Thr561 carries the phosphothreonine modification. Basic and acidic residues-rich tracts occupy residues 563-584 and 805-814; these read EENKIPDADKANEKKVDQPPEA and PKIESPKLER. Ser809 is modified (phosphoserine). Thr815 carries the post-translational modification Phosphothreonine. A compositionally biased stretch (basic and acidic residues) spans 821 to 832; it reads IDKKEEDLEDKN. Over residues 849 to 858 the composition is skewed to polar residues; the sequence is EKNSVNMDLD.

This sequence belongs to the heat shock protein 70 family. As to quaternary structure, interacts with HSPA8/HSC70. Interacts with HSPA1A (via NBD) and HSPA1B (via NBD). Post-translationally, phosphorylation on Ser-509 may be important for regulation of the HSPA8/HSC70 chaperone activity. As to expression, highly expressed in testis. Present at lower levels in most brain regions, except cerebellum. Overexpressed in cancer cells.

Its subcellular location is the cytoplasm. Its function is as follows. Acts as a nucleotide-exchange factor (NEF) for chaperone proteins HSPA1A and HSPA1B, promoting the release of ADP from HSPA1A/B thereby triggering client/substrate protein release. Prevents the aggregation of denatured proteins in cells under severe stress, on which the ATP levels decrease markedly. Inhibits HSPA8/HSC70 ATPase and chaperone activities. In Homo sapiens (Human), this protein is Heat shock protein 105 kDa (HSPH1).